The primary structure comprises 272 residues: Phosphate import ATP-binding protein PstB 1 (272 aa).

The 242-residue stretch at 26–267 folds into the ABC transporter domain; that stretch reads ISIENLNLFY…PMKKQTEDYI (242 aa). 58-65 lines the ATP pocket; the sequence is GPSGCGKS.

It belongs to the ABC transporter superfamily. Phosphate importer (TC 3.A.1.7) family. In terms of assembly, the complex is composed of two ATP-binding proteins (PstB), two transmembrane proteins (PstC and PstA) and a solute-binding protein (PstS).

Its subcellular location is the cell inner membrane. It carries out the reaction phosphate(out) + ATP + H2O = ADP + 2 phosphate(in) + H(+). Functionally, part of the ABC transporter complex PstSACB involved in phosphate import. Responsible for energy coupling to the transport system. The polypeptide is Phosphate import ATP-binding protein PstB 1 (Vibrio parahaemolyticus serotype O3:K6 (strain RIMD 2210633)).